The chain runs to 164 residues: Cell division protein SepF (164 aa).

Residues 21–71 (YQQGQQPAQQQQSPVQAVPTPAPAPQQQAKRAPVTPLHKPSTTTRNAAPAE) form a disordered region. Residues 22–54 (QQGQQPAQQQQSPVQAVPTPAPAPQQQAKRAPV) are compositionally biased toward low complexity.

The protein belongs to the SepF family. In terms of assembly, homodimer. Interacts with FtsZ.

The protein resides in the cytoplasm. Functionally, cell division protein that is part of the divisome complex and is recruited early to the Z-ring. Probably stimulates Z-ring formation, perhaps through the cross-linking of FtsZ protofilaments. Its function overlaps with FtsA. The polypeptide is Cell division protein SepF (Clavibacter michiganensis subsp. michiganensis (strain NCPPB 382)).